Reading from the N-terminus, the 968-residue chain is RNA polymerase-associated protein RapA (968 aa).

Positions 164 to 334 constitute a Helicase ATP-binding domain; it reads DVGRRHAPRV…FARLRLLDPN (171 aa). 177–184 provides a ligand contact to ATP; sequence DEVGLGKT. A DEAH box motif is present at residues 280–283; it reads DEAH. The Helicase C-terminal domain maps to 490-685; sequence RVEWLMGYLT…ALKAQLEQGR (196 aa).

This sequence belongs to the SNF2/RAD54 helicase family. RapA subfamily. Interacts with the RNAP. Has a higher affinity for the core RNAP than for the holoenzyme. Its ATPase activity is stimulated by binding to RNAP.

Functionally, transcription regulator that activates transcription by stimulating RNA polymerase (RNAP) recycling in case of stress conditions such as supercoiled DNA or high salt concentrations. Probably acts by releasing the RNAP, when it is trapped or immobilized on tightly supercoiled DNA. Does not activate transcription on linear DNA. Probably not involved in DNA repair. This chain is RNA polymerase-associated protein RapA, found in Salmonella typhi.